We begin with the raw amino-acid sequence, 347 residues long: Dihydroorotase (347 aa).

Zn(2+)-binding residues include histidine 14 and histidine 16. Substrate is bound by residues 16-18 (HLR) and asparagine 42. Positions 100, 137, and 175 each coordinate Zn(2+). Lysine 100 carries the N6-carboxylysine modification. Residue histidine 137 coordinates substrate. A substrate-binding site is contributed by leucine 220. Aspartate 248 is a Zn(2+) binding site. Aspartate 248 is a catalytic residue. Substrate-binding residues include histidine 252 and alanine 264.

The protein belongs to the metallo-dependent hydrolases superfamily. DHOase family. Class II DHOase subfamily. As to quaternary structure, homodimer. Requires Zn(2+) as cofactor.

The catalysed reaction is (S)-dihydroorotate + H2O = N-carbamoyl-L-aspartate + H(+). The protein operates within pyrimidine metabolism; UMP biosynthesis via de novo pathway; (S)-dihydroorotate from bicarbonate: step 3/3. In terms of biological role, catalyzes the reversible cyclization of carbamoyl aspartate to dihydroorotate. The polypeptide is Dihydroorotase (Pseudomonas syringae pv. syringae (strain B728a)).